The following is a 170-amino-acid chain: Large ribosomal subunit protein uL11 (170 aa).

Belongs to the universal ribosomal protein uL11 family. As to quaternary structure, part of the ribosomal stalk of the 50S ribosomal subunit. Interacts with L10 and the large rRNA to form the base of the stalk. L10 forms an elongated spine to which L12 dimers bind in a sequential fashion forming a multimeric L10(L12)X complex.

Forms part of the ribosomal stalk which helps the ribosome interact with GTP-bound translation factors. The protein is Large ribosomal subunit protein uL11 of Saccharolobus islandicus (strain M.14.25 / Kamchatka #1) (Sulfolobus islandicus).